A 145-amino-acid chain; its full sequence is Arginine repressor (145 aa).

This sequence belongs to the ArgR family.

The protein localises to the cytoplasm. Its pathway is amino-acid biosynthesis; L-arginine biosynthesis [regulation]. In terms of biological role, regulates arginine biosynthesis genes. The chain is Arginine repressor from Streptococcus pyogenes serotype M3 (strain ATCC BAA-595 / MGAS315).